The chain runs to 401 residues: MSQYSENIIIGAGAAGLFCAAQLAKLGKSVTVFDNGKKIGRKILMSGGGFCNFTNLEVTPAHYLSQNPHFVKSALARYTNWDFISLVAEQGITYHEKELGQLFCDEGAEQIVEMLKSECDKYGAKILLRSEVSQVERIQNDEKVRFVLQVNSTQWQCKNLIVATGGLSMPGLGATPFGYQIAEQFGIPVIPPRASLVPFTYRETDKFLTALSGISLPVTITALCGKSFYNQLLFTHRGISGPAVLQISNYWQPTESVEIDLLPNHNVEEEINQAKQSSPKQMLKTILVRLLPKKLVELWIEQGIVQDEVIANISKVRVKNLVDFIHHWEFTPNGTEGYRTAEVTMGGVDTKVISSKTMESNQVSGLYFIGEVLDVTGWLGGYNFQWAWSSAYACALSISRQ.

A15, D34, N35, R41, G47, N52, V132, E371, and F384 together coordinate FAD.

This sequence belongs to the BaiN/RdsA family. RdsA subfamily. The cofactor is FAD.

It carries out the reaction a 5,6-dihydrouridine in mRNA + NAD(+) = a uridine in mRNA + NADH + H(+). Catalyzes the synthesis of 5,6-dihydrouridine (D) at position 2449 in 23S rRNA. In Haemophilus influenzae (strain ATCC 51907 / DSM 11121 / KW20 / Rd), this protein is Ribosomal RNA dihydrouridine synthase.